A 551-amino-acid chain; its full sequence is Solute carrier family 22 member 3 (551 aa).

Residues 21-41 (VFLLLCLTGVTFAFLFVGVVF) form a helical membrane-spanning segment. Asn-72, Asn-99, and Asn-114 each carry an N-linked (GlcNAc...) asparagine glycan. The chain crosses the membrane as a helical span at residues 177–197 (LIIYLISCFGVGITGVVVAFA). Asn-199 carries N-linked (GlcNAc...) asparagine glycosylation. Helical transmembrane passes span 236 to 256 (IVGI…PGIA) and 264 to 284 (GIQL…WVVP). The short motif at 284–288 (PESPR) is the Proline-rich sequence element. Asn-317 carries N-linked (GlcNAc...) asparagine glycosylation. The next 3 helical transmembrane spans lie at 376 to 396 (IDFF…LLTI), 464 to 484 (GVSL…FLLF), and 493 to 513 (LPLI…MLLP).

The protein belongs to the major facilitator (TC 2.A.1) superfamily. Organic cation transporter (TC 2.A.1.19) family. In terms of tissue distribution, highly expressed in placenta. Highly expressed in kidney cortex. In kidney, expressed specifically in the proximal and distal convoluted tubules and within Bowman capsule. Expressed in brain, particularly in dopaminergic neurons of the substantia nigra compacta, non-aminergic neurons of the ventral tegmental area, substantia nigra reticulata, locus coeruleus, hippocampus and cortex. In brain, also detected in astrocytes in the substantia nigra reticulata, several hypothalamic nuclei and nigrostriatal region. Expressed in neurons and glial cells of amygdala.

The protein resides in the cell membrane. Its subcellular location is the apical cell membrane. It localises to the basolateral cell membrane. It is found in the mitochondrion membrane. The protein localises to the endomembrane system. The protein resides in the nucleus membrane. Its subcellular location is the nucleus outer membrane. It carries out the reaction (R)-noradrenaline(out) = (R)-noradrenaline(in). It catalyses the reaction (R)-adrenaline(out) = (R)-adrenaline(in). The catalysed reaction is serotonin(out) = serotonin(in). The enzyme catalyses dopamine(out) = dopamine(in). It carries out the reaction histamine(out) = histamine(in). It catalyses the reaction tyramine(in) = tyramine(out). The catalysed reaction is guanidine(out) = guanidine(in). The enzyme catalyses agmatine(out) = agmatine(in). It carries out the reaction spermidine(in) = spermidine(out). It catalyses the reaction L-histidyl-L-proline diketopiperazine(in) = L-histidyl-L-proline diketopiperazine(out). The catalysed reaction is (R)-salsolinol(in) = (R)-salsolinol(out). Electrogenic voltage-dependent transporter that mediates the transport of a variety of organic cations such as endogenous bioactive amines, cationic drugs and xenobiotics. Cation cellular uptake or release is driven by the electrochemical potential, i.e. membrane potential and concentration gradient. Functions as a Na(+)- and Cl(-)-independent, bidirectional uniporter. Implicated in monoamine neurotransmitters uptake such as dopamine, adrenaline/epinephrine, noradrenaline/norepinephrine, homovanillic acid, histamine, serotonin and tyramine, thereby supporting a role in homeostatic regulation of aminergic neurotransmission in the brain. Transports dopaminergic neuromodulators cyclo(his-pro) and salsolinol with low efficiency. May be involved in the uptake and disposition of cationic compounds by renal clearance from the blood flow. May contribute to regulate the transport of cationic compounds in testis across the blood-testis-barrier. Mediates the transport of polyamine spermidine and putrescine. Mediates the bidirectional transport of polyamine agmatine. Also transports guanidine. May also mediate intracellular transport of organic cations, thereby playing a role in amine metabolism and intracellular signaling. The polypeptide is Solute carrier family 22 member 3 (Mus musculus (Mouse)).